A 545-amino-acid chain; its full sequence is ATP synthase subunit alpha (545 aa).

ATP is bound at residue 173–180 (GDRQTGKT).

This sequence belongs to the ATPase alpha/beta chains family. As to quaternary structure, F-type ATPases have 2 components, CF(1) - the catalytic core - and CF(0) - the membrane proton channel. CF(1) has five subunits: alpha(3), beta(3), gamma(1), delta(1), epsilon(1). CF(0) has three main subunits: a(1), b(2) and c(9-12). The alpha and beta chains form an alternating ring which encloses part of the gamma chain. CF(1) is attached to CF(0) by a central stalk formed by the gamma and epsilon chains, while a peripheral stalk is formed by the delta and b chains.

The protein resides in the cell membrane. It carries out the reaction ATP + H2O + 4 H(+)(in) = ADP + phosphate + 5 H(+)(out). Functionally, produces ATP from ADP in the presence of a proton gradient across the membrane. The alpha chain is a regulatory subunit. The protein is ATP synthase subunit alpha of Leifsonia xyli subsp. xyli (strain CTCB07).